We begin with the raw amino-acid sequence, 294 residues long: 4-hydroxy-tetrahydrodipicolinate synthase (294 aa).

Threonine 47 contacts pyruvate. The active-site Proton donor/acceptor is the tyrosine 136. Lysine 164 (schiff-base intermediate with substrate) is an active-site residue. Residue valine 206 coordinates pyruvate.

This sequence belongs to the DapA family. In terms of assembly, homotetramer; dimer of dimers.

The protein localises to the cytoplasm. The catalysed reaction is L-aspartate 4-semialdehyde + pyruvate = (2S,4S)-4-hydroxy-2,3,4,5-tetrahydrodipicolinate + H2O + H(+). Its pathway is amino-acid biosynthesis; L-lysine biosynthesis via DAP pathway; (S)-tetrahydrodipicolinate from L-aspartate: step 3/4. Its function is as follows. Catalyzes the condensation of (S)-aspartate-beta-semialdehyde [(S)-ASA] and pyruvate to 4-hydroxy-tetrahydrodipicolinate (HTPA). The protein is 4-hydroxy-tetrahydrodipicolinate synthase of Nostoc sp. (strain PCC 7120 / SAG 25.82 / UTEX 2576).